A 222-amino-acid polypeptide reads, in one-letter code: Sugar fermentation stimulation protein homolog (222 aa).

This sequence belongs to the SfsA family.

The protein is Sugar fermentation stimulation protein homolog of Thermoplasma acidophilum (strain ATCC 25905 / DSM 1728 / JCM 9062 / NBRC 15155 / AMRC-C165).